Reading from the N-terminus, the 788-residue chain is Putative wall-associated receptor kinase-like 11 (788 aa).

The N-terminal stretch at 1–27 (MRCDNNYSFSILFSLLLILILDSKVVS) is a signal peptide. Residues 28 to 375 (LSTSCQSKSV…TFNCIGNKTR (348 aa)) lie on the Extracellular side of the membrane. 9 N-linked (GlcNAc...) asparagine glycosylation sites follow: Asn-65, Asn-80, Asn-121, Asn-159, Asn-233, Asn-253, Asn-278, Asn-295, and Asn-310. The atypical EGF-like stretch occupies residues 306 to 369 (CICNNVTISG…CVNLPGTFNC (64 aa)). 3 disulfide bridges follow: Cys-308–Cys-321, Cys-343–Cys-360, and Cys-354–Cys-369. Asn-372 carries N-linked (GlcNAc...) asparagine glycosylation. A helical transmembrane segment spans residues 376 to 396 (VTMIGVGSAFGILVLVVGIWW). Over 397–788 (LRKFLKKRRM…QPLFPHPTWI (392 aa)) the chain is Cytoplasmic. The Protein kinase domain occupies 451-726 (FSESRILGQG…KVFTDLEKIL (276 aa)). ATP is bound by residues 457 to 465 (LGQGGQGTV) and Lys-479. Residue Tyr-524 is modified to Phosphotyrosine. The active-site Proton acceptor is the Asp-576. 2 positions are modified to phosphothreonine: Thr-610 and Thr-615. Tyr-623 is subject to Phosphotyrosine.

It belongs to the protein kinase superfamily. Ser/Thr protein kinase family.

It is found in the membrane. The catalysed reaction is L-seryl-[protein] + ATP = O-phospho-L-seryl-[protein] + ADP + H(+). It catalyses the reaction L-threonyl-[protein] + ATP = O-phospho-L-threonyl-[protein] + ADP + H(+). Functionally, putative serine/threonine-protein kinase that may function as a signaling receptor of extracellular matrix component. The sequence is that of Putative wall-associated receptor kinase-like 11 (WAKL11) from Arabidopsis thaliana (Mouse-ear cress).